Reading from the N-terminus, the 338-residue chain is L-serine dehydratase (338 aa).

N6-(pyridoxal phosphate)lysine is present on Lys-39.

It belongs to the serine/threonine dehydratase family. Pyridoxal 5'-phosphate is required as a cofactor.

The protein resides in the cytoplasm. It catalyses the reaction L-serine = pyruvate + NH4(+). It functions in the pathway carbohydrate biosynthesis; gluconeogenesis. This Saccharomyces cerevisiae (strain YJM789) (Baker's yeast) protein is L-serine dehydratase (SDL1).